The chain runs to 278 residues: Orotidine 5'-phosphate decarboxylase (278 aa).

The Proton donor role is filled by K96.

This sequence belongs to the OMP decarboxylase family. Type 2 subfamily.

It carries out the reaction orotidine 5'-phosphate + H(+) = UMP + CO2. It participates in pyrimidine metabolism; UMP biosynthesis via de novo pathway; UMP from orotate: step 2/2. In Salinispora arenicola (strain CNS-205), this protein is Orotidine 5'-phosphate decarboxylase.